The primary structure comprises 364 residues: RNA-binding protein ZC3H11 (364 aa).

A C3H1-type zinc finger spans residues 64–92; the sequence is RYKTKLCKNFVQYGTCPYDIRCMFAHGEE. Positions 194-199 match the MKT1-binding motif motif; sequence VRHNPY. The interval 340–364 is disordered; that stretch reads EQSQSHLKREGNEGRGEGLHMFLSL. Basic and acidic residues predominate over residues 346–357; it reads LKREGNEGRGEG.

Interacts (via MKT1-binding motif) with MKT1. Interacts with PBP1 (via C-terminus); the interaction is direct. Post-translationally, phosphorylated at the N-terminus. CK1.2-dependent phosphorylation may lead to proteasome-dependent degradation of ZC3H11 in absence of stress.

Its subcellular location is the cytoplasm. Functionally, RNA-binding protein involved in regulation of mRNA stability. Binds AU-rich regions in the 3'-UTR of mRNAs and promotes their stabilization by recruiting a MKT1-containing complex. Stabilizes chaperone mRNAs during stress that causes an accumulation of misfolded or unfolded proteins in the cytoplasm. The sequence is that of RNA-binding protein ZC3H11 from Trypanosoma brucei brucei (strain 927/4 GUTat10.1).